We begin with the raw amino-acid sequence, 204 residues long: General odorant-binding protein 67 (204 aa).

An N-terminal signal peptide occupies residues 1 to 22; that stretch reads MNPVVCAFGVIFVVVTLELVVA. 3 cysteine pairs are disulfide-bonded: cysteine 57/cysteine 85, cysteine 81/cysteine 147, and cysteine 128/cysteine 157.

This sequence belongs to the PBP/GOBP family.

It localises to the secreted. Present in the aqueous fluid surrounding olfactory sensory dendrites and are thought to aid in the capture and transport of hydrophobic odorants into and through this fluid. The chain is General odorant-binding protein 67 (Obp67) from Anopheles gambiae (African malaria mosquito).